The chain runs to 219 residues: Chalcone--flavanone isomerase (219 aa).

3 residues coordinate substrate: Thr50, Asn115, and Ser188.

It belongs to the chalcone isomerase family.

The catalysed reaction is a chalcone = a flavanone.. The protein operates within secondary metabolite biosynthesis; flavonoid biosynthesis. Catalyzes the intramolecular cyclization of bicyclic chalcones into tricyclic (S)-flavanones. Responsible for the isomerization of 4,2',4',6'-tetrahydroxychalcone (also termed chalcone) into naringenin. The polypeptide is Chalcone--flavanone isomerase (CHI) (Clitoria ternatea (Butterfly pea)).